Here is a 144-residue protein sequence, read N- to C-terminus: Large ribosomal subunit protein uL15 (144 aa).

Residues 1 to 45 (MNLNTLSPDPGSRPSRRRVGRGIGSGLGKTCGKGHKGQKSRAGGY) are disordered. A compositionally biased stretch (gly residues) spans 21-31 (RGIGSGLGKTC).

It belongs to the universal ribosomal protein uL15 family. Part of the 50S ribosomal subunit.

In terms of biological role, binds to the 23S rRNA. The polypeptide is Large ribosomal subunit protein uL15 (Legionella pneumophila (strain Paris)).